Here is a 298-residue protein sequence, read N- to C-terminus: MQLEKMITEGSNAASAEIDRVSTLEMCRIINDEDKTVPLAVERVLPDIAAAIDVIHAQVSGGGRLIYLGAGTSGRLGILDASECPPTYGVKPGLVVGLIAGGEYAIQHAVEGAEDSREGGVNDLKNIGLTAQDVVVGIAASGRTPYVIAGLEYARQLGCRTVGISCNPGSAVSTTAEFAITPIVGAEVVTGSSRMKAGTAQKLVLNMLSTGLMIKSGKVFGNLMVDVVATNEKLHVRQVNIVKNATGCNAEQAETALIACERNCKTAIVMVLKNLDAAEAKKRLDQHGGFIRQVLDKE.

The 164-residue stretch at 55 to 218 folds into the SIS domain; the sequence is IHAQVSGGGR…STGLMIKSGK (164 aa). Glutamate 83 functions as the Proton donor in the catalytic mechanism. Glutamate 114 is an active-site residue.

It belongs to the GCKR-like family. MurNAc-6-P etherase subfamily. Homodimer.

It carries out the reaction N-acetyl-D-muramate 6-phosphate + H2O = N-acetyl-D-glucosamine 6-phosphate + (R)-lactate. It participates in amino-sugar metabolism; 1,6-anhydro-N-acetylmuramate degradation. Its pathway is amino-sugar metabolism; N-acetylmuramate degradation. It functions in the pathway cell wall biogenesis; peptidoglycan recycling. In terms of biological role, specifically catalyzes the cleavage of the D-lactyl ether substituent of MurNAc 6-phosphate, producing GlcNAc 6-phosphate and D-lactate. Together with AnmK, is also required for the utilization of anhydro-N-acetylmuramic acid (anhMurNAc) either imported from the medium or derived from its own cell wall murein, and thus plays a role in cell wall recycling. The sequence is that of N-acetylmuramic acid 6-phosphate etherase from Escherichia coli O7:K1 (strain IAI39 / ExPEC).